Consider the following 280-residue polypeptide: 4-hydroxy-3-methylbut-2-enyl diphosphate reductase (280 aa).

Cysteine 12 contributes to the [4Fe-4S] cluster binding site. Positions 40 and 72 each coordinate (2E)-4-hydroxy-3-methylbut-2-enyl diphosphate. Dimethylallyl diphosphate is bound by residues histidine 40 and histidine 72. Histidine 40 and histidine 72 together coordinate isopentenyl diphosphate. [4Fe-4S] cluster is bound at residue cysteine 94. (2E)-4-hydroxy-3-methylbut-2-enyl diphosphate is bound at residue histidine 122. Histidine 122 contributes to the dimethylallyl diphosphate binding site. Residue histidine 122 participates in isopentenyl diphosphate binding. Glutamate 124 serves as the catalytic Proton donor. A (2E)-4-hydroxy-3-methylbut-2-enyl diphosphate-binding site is contributed by threonine 160. Cysteine 188 is a [4Fe-4S] cluster binding site. Residues serine 216, asparagine 218, and serine 260 each contribute to the (2E)-4-hydroxy-3-methylbut-2-enyl diphosphate site. Serine 216, asparagine 218, and serine 260 together coordinate dimethylallyl diphosphate. Isopentenyl diphosphate contacts are provided by serine 216, asparagine 218, and serine 260.

This sequence belongs to the IspH family. [4Fe-4S] cluster serves as cofactor.

The enzyme catalyses isopentenyl diphosphate + 2 oxidized [2Fe-2S]-[ferredoxin] + H2O = (2E)-4-hydroxy-3-methylbut-2-enyl diphosphate + 2 reduced [2Fe-2S]-[ferredoxin] + 2 H(+). It carries out the reaction dimethylallyl diphosphate + 2 oxidized [2Fe-2S]-[ferredoxin] + H2O = (2E)-4-hydroxy-3-methylbut-2-enyl diphosphate + 2 reduced [2Fe-2S]-[ferredoxin] + 2 H(+). The protein operates within isoprenoid biosynthesis; dimethylallyl diphosphate biosynthesis; dimethylallyl diphosphate from (2E)-4-hydroxy-3-methylbutenyl diphosphate: step 1/1. It participates in isoprenoid biosynthesis; isopentenyl diphosphate biosynthesis via DXP pathway; isopentenyl diphosphate from 1-deoxy-D-xylulose 5-phosphate: step 6/6. Catalyzes the conversion of 1-hydroxy-2-methyl-2-(E)-butenyl 4-diphosphate (HMBPP) into a mixture of isopentenyl diphosphate (IPP) and dimethylallyl diphosphate (DMAPP). Acts in the terminal step of the DOXP/MEP pathway for isoprenoid precursor biosynthesis. This Pelobacter propionicus (strain DSM 2379 / NBRC 103807 / OttBd1) protein is 4-hydroxy-3-methylbut-2-enyl diphosphate reductase.